We begin with the raw amino-acid sequence, 242 residues long: Probable transcriptional regulatory protein Bphy_2064 (242 aa).

It belongs to the TACO1 family.

It localises to the cytoplasm. This Paraburkholderia phymatum (strain DSM 17167 / CIP 108236 / LMG 21445 / STM815) (Burkholderia phymatum) protein is Probable transcriptional regulatory protein Bphy_2064.